A 159-amino-acid polypeptide reads, in one-letter code: Ubiquitin-conjugating enzyme E2 variant 1B (159 aa).

In terms of domain architecture, UBC core spans 11–159 (PRNFRLLEEL…KGLVVKCCVM (149 aa)).

The protein belongs to the ubiquitin-conjugating enzyme family. Heterodimer with UBC35 or UBC36. In terms of tissue distribution, expressed in roots, shoots, leaves, stems and flowers, but not in pollen.

In terms of biological role, has no ubiquitin ligase activity on its own. The heterodimer with UBC catalyzes the synthesis of non-canonical poly-ubiquitin chains that are linked through 'Lys-63'. This type of poly-ubiquitination does not lead to protein degradation by the proteasome. Mediates transcriptional activation of target genes. May play a role in the control of progress through the cell cycle and differentiation. May play a role in the error-free DNA repair pathway and contributes to the survival of cells after DNA damage. The chain is Ubiquitin-conjugating enzyme E2 variant 1B (UEV1B) from Arabidopsis thaliana (Mouse-ear cress).